A 548-amino-acid chain; its full sequence is 4-coumarate--CoA ligase CCL1 (548 aa).

Residues 195-203 (SSGTTGLPK), 337-342 (QGYGMT), Asp426, 438-441 (IVDR), and Lys532 each bind ATP. Residues 268–337 (EISKLLELIE…EKLPHAKLGQ (70 aa)) form an SBD1 region. Residues 338–405 (GYGMTEAGPV…IRGKQIMKGY (68 aa)) are SBD2.

It belongs to the ATP-dependent AMP-binding enzyme family. As to expression, mostly expressed in glandular trichomes (lupulin glands) after flowering, and, to a lower extent, in stems, leaves, cones and flowers.

It is found in the cytoplasm. The enzyme catalyses (E)-4-coumarate + ATP + CoA = (E)-4-coumaroyl-CoA + AMP + diphosphate. Its pathway is secondary metabolite biosynthesis. Involved in the biosynthesis of prenylated phenolics natural products which contribute to the bitter taste of beer and display broad biological activities. Catalyzes the ligation of CoA on (E)-4-coumarate to produce (E)-4-coumaroyl-CoA. This chain is 4-coumarate--CoA ligase CCL1, found in Humulus lupulus (European hop).